Consider the following 446-residue polypeptide: Phosphoglucosamine mutase (446 aa).

The active-site Phosphoserine intermediate is Ser101. Mg(2+)-binding residues include Ser101, Asp240, Asp242, and Asp244. Ser101 carries the post-translational modification Phosphoserine.

Belongs to the phosphohexose mutase family. Mg(2+) is required as a cofactor. In terms of processing, activated by phosphorylation.

The enzyme catalyses alpha-D-glucosamine 1-phosphate = D-glucosamine 6-phosphate. Functionally, catalyzes the conversion of glucosamine-6-phosphate to glucosamine-1-phosphate. The protein is Phosphoglucosamine mutase of Pseudomonas putida (strain W619).